Here is an 838-residue protein sequence, read N- to C-terminus: MAERSGKITAGQAYIEVEYDYEYDAKDRKIVIRQGERYLLVKKTNDDWWQVRPDENSKAFYVPAQYVKEVTRKALMPPVKQATGLPNNSMKTIQSMHLQRSTENVNKMPELSSFGKPSSSVQGTGLIRDANQNFGSNYNSGQTLNLSLDLTHNNGKFNSDSHSPKVSSQNRTRLFGHFPGPEFLDIEKTSFSQEQSCDSAGEGSERIQQDSESGDELSSSSTEQMRATTPPNQGRPDSPVYANLQELKISQSALPPLPGSPAIQVNGEWETHKDSSGRCYYYNRTTQERTWKPPRWARDVSTSRDFQSPGEQEPLSSEENYHSSCFSQSDSQCGSPPRGWSEELDERGHTLYTSDYTKEKWLKHVDDQGRQYYYSADGSRSEWELPKYNASSQQQREIIKSRSLDRRLQEPIVLTKWRHSTIVLDSNDKDSPTTTKLCLPENESPPTSSKHQDPGQEKYGLLNVTKITENGKKVRKNWLSSWAVLQGSSLLFTKTQGSSTSWFGSNQSKPEFTVDLKGAVIEMASKDKSSKKNVFELKTRQGTELLIQSDNDAVINDWFKVLSSTINNQVAEADEAAEEETPDSPGVEKHDKEKDQKELKKLRSMKGSSMDSSEQKKTKKNLKKFLTRRPTLQAVREKGYIKDQVFGSNLANLCQRENGTVPKFVKLCIEHVEEHGLDVDGIYRVSGNLAVIQKLRFAVNHDEKLDLNDSKWEDIHVITGALKMFFRELPEPLFTFNHFNDFVNAIKQEPRQRVTAVKDLIRQLPKPNQDTMQILFRHLKRVIENGEKNRMTYQSIAIVFGPTLLKPERETGNIAVHTVYQNQIVELILLELSTVFGR.

The 63-residue stretch at 10 to 72 (AGQAYIEVEY…PAQYVKEVTR (63 aa)) folds into the SH3 domain. 2 stretches are compositionally biased toward polar residues: residues 155 to 172 (GKFNSDSHSPKVSSQNRT) and 189 to 198 (TSFSQEQSCD). The segment at 155-239 (GKFNSDSHSP…PPNQGRPDSP (85 aa)) is disordered. Residue Ser-163 is modified to Phosphoserine. Phosphoserine is present on residues Ser-199, Ser-211, and Ser-213. Phosphothreonine occurs at positions 228 and 229. Ser-238 carries the post-translational modification Phosphoserine. A Phosphotyrosine modification is found at Tyr-241. The WW 1 domain maps to 263 to 296 (IQVNGEWETHKDSSGRCYYYNRTTQERTWKPPRW). The segment covering 291–302 (WKPPRWARDVST) has biased composition (basic and acidic residues). Positions 291-346 (WKPPRWARDVSTSRDFQSPGEQEPLSSEENYHSSCFSQSDSQCGSPPRGWSEELDE) are disordered. Residues 303 to 334 (SRDFQSPGEQEPLSSEENYHSSCFSQSDSQCG) are compositionally biased toward polar residues. A WW 2 domain is found at 355-388 (DYTKEKWLKHVDDQGRQYYYSADGSRSEWELPKY). The disordered stretch occupies residues 425–456 (DSNDKDSPTTTKLCLPENESPPTSSKHQDPGQ). The PH domain occupies 466-567 (KITENGKKVR…WFKVLSSTIN (102 aa)). Positions 572-582 (EADEAAEEETP) are enriched in acidic residues. The interval 572–620 (EADEAAEEETPDSPGVEKHDKEKDQKELKKLRSMKGSSMDSSEQKKTKK) is disordered. The residue at position 584 (Ser-584) is a Phosphoserine. A compositionally biased stretch (basic and acidic residues) spans 586–601 (GVEKHDKEKDQKELKK). The Rho-GAP domain occupies 648 to 836 (SNLANLCQRE…LILLELSTVF (189 aa)).

In terms of biological role, GTPase activator for the Rho-type GTPases by converting them to an inactive GDP-bound state. This Mus musculus (Mouse) protein is Rho GTPase-activating protein 12 (Arhgap12).